The sequence spans 764 residues: 5-methyltetrahydropteroyltriglutamate--homocysteine methyltransferase (764 aa).

5-methyltetrahydropteroyltri-L-glutamate is bound by residues 16–19 and Lys-115; that span reads RELK. Residues 435-437 and Glu-488 each bind L-homocysteine; that span reads IGS. L-methionine is bound by residues 435 to 437 and Glu-488; that span reads IGS. 5-methyltetrahydropteroyltri-L-glutamate-binding positions include 519-520 and Trp-565; that span reads RC. Asp-603 is a binding site for L-homocysteine. Asp-603 serves as a coordination point for L-methionine. 5-methyltetrahydropteroyltri-L-glutamate is bound at residue Glu-609. The Zn(2+) site is built by His-645, Cys-647, and Glu-669. His-698 (proton donor) is an active-site residue. Cys-730 lines the Zn(2+) pocket.

This sequence belongs to the vitamin-B12 independent methionine synthase family. Requires Zn(2+) as cofactor.

The enzyme catalyses 5-methyltetrahydropteroyltri-L-glutamate + L-homocysteine = tetrahydropteroyltri-L-glutamate + L-methionine. The protein operates within amino-acid biosynthesis; L-methionine biosynthesis via de novo pathway; L-methionine from L-homocysteine (MetE route): step 1/1. Functionally, catalyzes the transfer of a methyl group from 5-methyltetrahydrofolate to homocysteine resulting in methionine formation. The chain is 5-methyltetrahydropteroyltriglutamate--homocysteine methyltransferase from Burkholderia mallei (strain NCTC 10247).